The sequence spans 280 residues: Four and a half LIM domains protein 1 (280 aa).

N-acetylserine is present on serine 2. Lysine 4 bears the N6-acetyllysine mark. The segment at cysteine 7–cysteine 31 adopts a C4-type zinc-finger fold. LIM zinc-binding domains lie at cysteine 40–cysteine 92, cysteine 101–cysteine 153, cysteine 162–cysteine 212, and cysteine 221–cysteine 276. Lysine 86 participates in a covalent cross-link: Glycyl lysine isopeptide (Lys-Gly) (interchain with G-Cter in SUMO2).

Isoform 1 seems to be most abundant in each tissue and isoform 2 much less abundant. Isoform 1 is highly expressed in skeletal muscle and lung, and to a lesser extent in heart, brain and kidney. Isoform 2 was found in brain, lung kidney and genital organs.

It is found in the cytoplasm. The protein resides in the nucleus. Functionally, may have an involvement in muscle development or hypertrophy. Isoform 2 binds to RBP-J and plays a negative regulatory role in the RBP-J-mediated transcription in mammalian systems. The polypeptide is Four and a half LIM domains protein 1 (Fhl1) (Mus musculus (Mouse)).